The primary structure comprises 636 residues: Molybdenum cofactor biosynthesis protein 1 (636 aa).

The interval 1–383 is molybdenum cofactor biosynthesis protein A; the sequence is MAARPLSRML…QMKNRPMILI (383 aa). At S64 the chain carries Phosphoserine. In terms of domain architecture, Radical SAM core spans 64–277; the sequence is SFGRQHSYLR…LDTVRQQWPE (214 aa). R73 is a binding site for GTP. Residues C80 and C84 each coordinate [4Fe-4S] cluster. S-adenosyl-L-methionine is bound at residue Y86. C87 provides a ligand contact to [4Fe-4S] cluster. GTP is bound at residue R123. Residue G127 coordinates S-adenosyl-L-methionine. A GTP-binding site is contributed by T154. S178 lines the S-adenosyl-L-methionine pocket. K198 bears the N6-acetyllysine mark. K215 provides a ligand contact to GTP. M249 contributes to the S-adenosyl-L-methionine binding site. [4Fe-4S] cluster contacts are provided by C312 and C315. 317 to 319 is a GTP binding site; sequence RLR. C329 contacts [4Fe-4S] cluster. Residues 414–636 are molybdenum cofactor biosynthesis protein C; it reads MSFSSQVATL…GGQRGDFHRA (223 aa). The segment at 456–480 is disordered; the sequence is DANSKCLSPGSWASAAPSGPQLTSE. Low complexity predominate over residues 463-475; sequence SPGSWASAAPSGP. The residue at position 528 (K528) is an N6-acetyllysine. D606 acts as the For molybdenum cofactor biosynthesis protein C activity in catalysis.

This sequence in the C-terminal section; belongs to the MoaC family. It in the N-terminal section; belongs to the radical SAM superfamily. MoaA family. Isoform MOCS1A and isoform MOCS1B probably form a heterooligomer. It depends on [4Fe-4S] cluster as a cofactor. As to expression, isoform MOCS1A and isoform 2 are widely expressed.

It carries out the reaction GTP + AH2 + S-adenosyl-L-methionine = (8S)-3',8-cyclo-7,8-dihydroguanosine 5'-triphosphate + 5'-deoxyadenosine + L-methionine + A + H(+). It catalyses the reaction (8S)-3',8-cyclo-7,8-dihydroguanosine 5'-triphosphate = cyclic pyranopterin phosphate + diphosphate. It functions in the pathway cofactor biosynthesis; molybdopterin biosynthesis. In terms of biological role, isoform MOCS1A and isoform MOCS1B probably form a complex that catalyzes the conversion of 5'-GTP to cyclic pyranopterin monophosphate (cPMP). MOCS1A catalyzes the cyclization of GTP to (8S)-3',8-cyclo-7,8-dihydroguanosine 5'-triphosphate and MOCS1B catalyzes the subsequent conversion of (8S)-3',8-cyclo-7,8-dihydroguanosine 5'-triphosphate to cPMP. The protein is Molybdenum cofactor biosynthesis protein 1 (MOCS1) of Homo sapiens (Human).